A 476-amino-acid chain; its full sequence is MKRVLLLLLAVVCGHALERGRDYEKDKVCKELSTLGKDDFRTLSLVLYSRKFPSGTFDQVMKLVKEVVSLTEDCCTEDADPGCYDNRTSALSATSCESDSPFPVHPGTAECCTKEGLGRKLCMAALKHPPQEFPTYVEPANDEICEAFRQDPMEFADKFLYEYSSNYGQAPLPILVSYTKSYLSMVGTCCTSASPTVCFLKERLQIKHLSLLTTLSNRVCSQYAAYGKEKSRRSHLIKLAQKAPTAALKEVLPLAEDITNILSKCCESTSEDCMAKELPEHTVKICDTLSTKNPKFEECCQEKTPMDIFVCTYFMPAAQPPEPANVELPTSKDVCDSKNINVMDQYTFELSRKTHIPEVFLSKVLEPTLKSLSECCHSADSTACLNAKGPVLKKEVSSFIDKGQELCAGYSENTFTEYKKKLSQQLRAKLPEATSAELAELVEKHSDFASKCCSINSPPNYCDSEIDAEIKNLPEP.

A signal peptide spans 1-16 (MKRVLLLLLAVVCGHA). Albumin domains lie at 17–208 (LERG…QIKH), 209–394 (LSLL…VLKK), and 395–476 (EVSS…LPEP). 2 disulfides stabilise this stretch: Cys-29-Cys-75 and Cys-74-Cys-83. Residue Asn-86 is glycosylated (N-linked (GlcNAc...) asparagine). Disulfide bonds link Cys-96/Cys-112, Cys-111/Cys-122, Cys-145/Cys-190, Cys-189/Cys-198, Cys-220/Cys-266, Cys-265/Cys-273, Cys-286/Cys-300, Cys-299/Cys-311, Cys-335/Cys-376, Cys-375/Cys-384, Cys-407/Cys-453, and Cys-452/Cys-462.

The protein belongs to the ALB/AFP/VDB family. Associates with membrane-bound immunoglobulin on the surface of B-lymphocytes and with IgG Fc receptor on the membranes of T-lymphocytes. Interacts with LRP2; the interaction is required for renal uptake of GC in complex with 25-hydroxyvitamin D3.

It is found in the secreted. Involved in vitamin D transport and storage, scavenging of extracellular G-actin, enhancement of the chemotactic activity of C5 alpha for neutrophils in inflammation and macrophage activation. This Oryctolagus cuniculus (Rabbit) protein is Vitamin D-binding protein (GC).